A 577-amino-acid polypeptide reads, in one-letter code: Protein GPR108 (577 aa).

The signal sequence occupies residues 1–34; sequence MAVSERRGLSGESPAQCRWEYLSLLVLMLSGCSG. 2 N-linked (GlcNAc...) asparagine glycosylation sites follow: Asn59 and Asn111. A disordered region spans residues 144-224; sequence LLPEAPSQSG…TRGPSGKEKD (81 aa). Asn233 and Asn237 each carry an N-linked (GlcNAc...) asparagine glycan. The next 7 membrane-spanning stretches (helical) occupy residues 296–316, 325–345, 369–389, 400–420, 434–454, 482–502, and 506–526; these read LYLI…SVLC, IHWL…FHSI, LLKG…WAFV, IFGI…VIES, ILFL…VWSI, VMVI…RVAV, and WQWL…VLTG.

Belongs to the LU7TM family.

It localises to the golgi apparatus. It is found in the cis-Golgi network membrane. The protein localises to the trans-Golgi network membrane. Its subcellular location is the golgi apparatus membrane. May play a role in intracellular immune modulation by activating NF-kappaB response and attenuating Toll-like-receptor response. The polypeptide is Protein GPR108 (Gpr108) (Rattus norvegicus (Rat)).